We begin with the raw amino-acid sequence, 417 residues long: MTTQLGPALVLGVALCLGCGQPLPQVPERPFSVLWNVPSAHCEARFGVHLPLNALGIIANRGQHFHGQNMTIFYKNQLGLYPYFGPRGTAHNGGIPQALPLDRHLALAAYQIHHSLRPGFAGPAVLDWEEWCPLWAGNWGRRRAYQAASWAWAQQVFPDLDPQEQLYKAYTGFEQAARALMEDTLRVAQALRPHGLWGFYHYPACGNGWHSMASNYTGRCHAATLARNTQLHWLWAASSALFPSIYLPPRLPPAHHQAFVRHRLEEAFRVALVGHRHPLPVLAYVRLTHRRSGRFLSQDDLVQSIGVSAALGAAGVVLWGDLSLSSSEEECWHLHDYLVDTLGPYVINVTRAAMACSHQRCHGHGRCARRDPGQMEAFLHLWPDGSLGDWKSFSCHCYWGWAGPTCQEPRPGPKEAV.

The N-terminal stretch at Met1–Gly20 is a signal peptide. Cystine bridges form between Cys42–Cys331, Cys205–Cys220, Cys356–Cys367, Cys361–Cys395, and Cys397–Cys406. A glycan (N-linked (GlcNAc...) asparagine) is linked at Asn69. The active-site Proton donor is the Glu129. N-linked (GlcNAc...) asparagine glycosylation occurs at Asn215. The 56-residue stretch at Ala352 to Gln407 folds into the EGF-like domain.

Belongs to the glycosyl hydrolase 56 family. Post-translationally, N-glycosylated. As to expression, expressed in sperm. Highly expressed in epidermis of the skin, where it is expressed intracellularily in the deep horny layer (at protein level). Bone marrow, testis and kidney.

It localises to the secreted. Its subcellular location is the cell membrane. The protein resides in the cytoplasmic vesicle. It is found in the secretory vesicle. The protein localises to the acrosome. It localises to the endoplasmic reticulum. Its subcellular location is the early endosome. The enzyme catalyses Random hydrolysis of (1-&gt;4)-linkages between N-acetyl-beta-D-glucosamine and D-glucuronate residues in hyaluronate.. In terms of biological role, facilitates sperm penetration into the layer of cumulus cells surrounding the egg by digesting hyaluronic acid. Involved in induction of the acrosome reaction in the sperm. Involved in follicular atresia, the breakdown of immature ovarian follicles that are not selected to ovulate. Induces ovarian granulosa cell apoptosis, possibly via apoptotic signaling pathway involving CASP8 and CASP3 activation, and poly(ADP-ribose) polymerase (PARP) cleavage. Has no hyaluronidase activity in embryonic fibroblasts in vitro. Has no hyaluronidase activity in granulosa cells in vitro. This Homo sapiens (Human) protein is Hyaluronidase-3 (HYAL3).